A 37-amino-acid polypeptide reads, in one-letter code: Large ribosomal subunit protein bL36c (37 aa).

This sequence belongs to the bacterial ribosomal protein bL36 family.

It is found in the plastid. The protein localises to the chloroplast. In Oenothera argillicola (Appalachian evening primrose), this protein is Large ribosomal subunit protein bL36c.